Here is a 142-residue protein sequence, read N- to C-terminus: Large ribosomal subunit protein uL13 (142 aa).

This sequence belongs to the universal ribosomal protein uL13 family. As to quaternary structure, part of the 50S ribosomal subunit.

This protein is one of the early assembly proteins of the 50S ribosomal subunit, although it is not seen to bind rRNA by itself. It is important during the early stages of 50S assembly. This is Large ribosomal subunit protein uL13 from Histophilus somni (strain 129Pt) (Haemophilus somnus).